We begin with the raw amino-acid sequence, 357 residues long: Glucose-6-phosphatase catalytic subunit 1 (357 aa).

The Lumenal portion of the chain corresponds to 1–28 (MEERMNVLHDFGIQSTRYLQVNYEDSQD). The chain crosses the membrane as a helical span at residues 29–49 (WFVLVSVIADLRNAFYVLFPI). Over 50–60 (WFHIQETVGIN) the chain is Cytoplasmic. Residues 61-81 (LLWVAVVGDWFNLVFKWILFG) form a helical membrane-spanning segment. The Lumenal portion of the chain corresponds to 82 to 117 (QRPYWWVLDTDYYSNSSVPLIKQFPVTCETGPGSPS). A substrate-binding site is contributed by Arg-83. Asn-96 is a glycosylation site (N-linked (GlcNAc...) asparagine). Residues 118–138 (GHAMGTAGVYYVMVTSTLAIF) traverse the membrane as a helical segment. His-119 serves as the catalytic Proton donor. Topologically, residues 139 to 147 (RGKKKSTYG) are cytoplasmic. A helical transmembrane segment spans residues 148-168 (FRCLNVVLWLGYWAVQLNVCL). Over 169–170 (SR) the chain is Lumenal. Arg-170 is a substrate binding site. Residues 171 to 191 (IYLAAHFPHQVVAGVLSGIAV) traverse the membrane as a helical segment. Residue His-176 is the Nucleophile of the active site. Over 192–211 (AETFSHIRGIYNASLQRYCL) the chain is Cytoplasmic. Residues 212–232 (ITFFLFGFALGFYLLLKGLGV) form a helical membrane-spanning segment. The Lumenal segment spans residues 233 to 254 (DLLWTLEKAKRWCERPEWVHLD). The helical transmembrane segment at 255-275 (TTPFASLFKNLGTLLGLGLAL) threads the bilayer. Over 276 to 291 (NSSMYRKSCKGELRKS) the chain is Cytoplasmic. A helical transmembrane segment spans residues 292–312 (LPFRLACIVASLGLLHLFDSL). Over 313-320 (KPPSQIES) the chain is Lumenal. The chain crosses the membrane as a helical span at residues 321–341 (IFYILSFCKSATVPFASVSLI). Over 342 to 357 (PYCLARLLGQTHKKSL) the chain is Cytoplasmic. Residues 354 to 357 (KKSL) carry the Prevents secretion from ER motif.

Belongs to the glucose-6-phosphatase family.

The protein localises to the endoplasmic reticulum membrane. The catalysed reaction is D-glucose 6-phosphate + H2O = D-glucose + phosphate. The protein operates within carbohydrate biosynthesis; gluconeogenesis. Functionally, hydrolyzes glucose-6-phosphate to glucose in the endoplasmic reticulum. Forms with the glucose-6-phosphate transporter (SLC37A4/G6PT) the complex responsible for glucose production in the terminal step of glycogenolysis and gluconeogenesis. Hence, it is the key enzyme in homeostatic regulation of blood glucose levels. This is Glucose-6-phosphatase catalytic subunit 1 (G6pc1) from Rattus norvegicus (Rat).